Consider the following 514-residue polypeptide: 2,3-bisphosphoglycerate-independent phosphoglycerate mutase (514 aa).

Residues aspartate 14 and serine 64 each contribute to the Mn(2+) site. Serine 64 (phosphoserine intermediate) is an active-site residue. Residues histidine 125, 155 to 156 (RD), arginine 187, arginine 193, 263 to 266 (RADR), and lysine 336 contribute to the substrate site. Positions 403, 407, 444, 445, and 463 each coordinate Mn(2+).

This sequence belongs to the BPG-independent phosphoglycerate mutase family. As to quaternary structure, monomer. Requires Mn(2+) as cofactor.

The catalysed reaction is (2R)-2-phosphoglycerate = (2R)-3-phosphoglycerate. It functions in the pathway carbohydrate degradation; glycolysis; pyruvate from D-glyceraldehyde 3-phosphate: step 3/5. In terms of biological role, catalyzes the interconversion of 2-phosphoglycerate and 3-phosphoglycerate. The chain is 2,3-bisphosphoglycerate-independent phosphoglycerate mutase from Shewanella sp. (strain ANA-3).